We begin with the raw amino-acid sequence, 504 residues long: Cytochrome P450 6a9 (504 aa).

Cys-449 is a binding site for heme.

Belongs to the cytochrome P450 family. Requires heme as cofactor.

The protein resides in the endoplasmic reticulum membrane. Its subcellular location is the microsome membrane. Its function is as follows. Involved in the metabolism of insect hormones and in the breakdown of synthetic insecticides. This is Cytochrome P450 6a9 (Cyp6a9) from Drosophila melanogaster (Fruit fly).